We begin with the raw amino-acid sequence, 115 residues long: Large ribosomal subunit protein bL20 (115 aa).

The protein belongs to the bacterial ribosomal protein bL20 family.

In terms of biological role, binds directly to 23S ribosomal RNA and is necessary for the in vitro assembly process of the 50S ribosomal subunit. It is not involved in the protein synthesizing functions of that subunit. The chain is Large ribosomal subunit protein bL20 from Chlorobaculum tepidum (strain ATCC 49652 / DSM 12025 / NBRC 103806 / TLS) (Chlorobium tepidum).